The chain runs to 299 residues: 4-diphosphocytidyl-2-C-methyl-D-erythritol kinase (299 aa).

Residue K16 is part of the active site. 97 to 107 (PVASGIGGGSA) is an ATP binding site. D140 is a catalytic residue.

Belongs to the GHMP kinase family. IspE subfamily.

The enzyme catalyses 4-CDP-2-C-methyl-D-erythritol + ATP = 4-CDP-2-C-methyl-D-erythritol 2-phosphate + ADP + H(+). It functions in the pathway isoprenoid biosynthesis; isopentenyl diphosphate biosynthesis via DXP pathway; isopentenyl diphosphate from 1-deoxy-D-xylulose 5-phosphate: step 3/6. Functionally, catalyzes the phosphorylation of the position 2 hydroxy group of 4-diphosphocytidyl-2C-methyl-D-erythritol. This Roseobacter denitrificans (strain ATCC 33942 / OCh 114) (Erythrobacter sp. (strain OCh 114)) protein is 4-diphosphocytidyl-2-C-methyl-D-erythritol kinase.